The sequence spans 440 residues: Cell division protein DivIB (440 aa).

The span at 1–10 (MMDDKTKNDQ) shows a compositional bias: basic and acidic residues. Disordered regions lie at residues 1–97 (MMDD…DSNI) and 123–154 (QHQS…TQLK). Residues 1–174 (MMDDKTKNDQ…RRKRQKRIQY (174 aa)) are Cytoplasmic-facing. Residues 12 to 21 (ESNEDKDELE) show a composition bias toward acidic residues. The span at 27–39 (TSKKRRQRKRSKA) shows a compositional bias: basic residues. Low complexity predominate over residues 78–87 (DSASSHANDN). Over residues 88–97 (NIDDSTDSNI) the composition is skewed to acidic residues. A compositionally biased stretch (polar residues) spans 124–134 (HQSAPNEQNSD). The chain crosses the membrane as a helical span at residues 175–195 (SVITILVLLIAVILIYMFSPL). Residues 196–264 (SKIAHVNING…NTLNVDITEN (69 aa)) enclose the POTRA domain. Over 196 to 440 (SKIAHVNING…KINKQSSKNN (245 aa)) the chain is Extracellular. The interval 397–440 (YRGNTSTQSESDKNVTKSSQEENQAKEELQSVLNKINKQSSKNN) is disordered. Residues 406 to 425 (ESDKNVTKSSQEENQAKEEL) show a composition bias toward basic and acidic residues. The segment covering 427 to 440 (SVLNKINKQSSKNN) has biased composition (polar residues).

The protein belongs to the FtsQ/DivIB family. DivIB subfamily.

The protein localises to the cell membrane. In terms of biological role, cell division protein that may be involved in stabilizing or promoting the assembly of the division complex. In Staphylococcus aureus (strain MRSA252), this protein is Cell division protein DivIB.